Consider the following 514-residue polypeptide: 2,3-bisphosphoglycerate-independent phosphoglycerate mutase (514 aa).

Mn(2+) contacts are provided by D14 and S64. Catalysis depends on S64, which acts as the Phosphoserine intermediate. Residues H125, 155–156 (RD), R187, R193, 263–266 (RADR), and K336 contribute to the substrate site. Residues D403, H407, D444, H445, and H463 each contribute to the Mn(2+) site.

It belongs to the BPG-independent phosphoglycerate mutase family. As to quaternary structure, monomer. It depends on Mn(2+) as a cofactor.

It carries out the reaction (2R)-2-phosphoglycerate = (2R)-3-phosphoglycerate. It functions in the pathway carbohydrate degradation; glycolysis; pyruvate from D-glyceraldehyde 3-phosphate: step 3/5. Its function is as follows. Catalyzes the interconversion of 2-phosphoglycerate and 3-phosphoglycerate. This chain is 2,3-bisphosphoglycerate-independent phosphoglycerate mutase, found in Shigella flexneri.